Reading from the N-terminus, the 237-residue chain is Phosphoribosylaminoimidazole-succinocarboxamide synthase (237 aa).

This sequence belongs to the SAICAR synthetase family.

The enzyme catalyses 5-amino-1-(5-phospho-D-ribosyl)imidazole-4-carboxylate + L-aspartate + ATP = (2S)-2-[5-amino-1-(5-phospho-beta-D-ribosyl)imidazole-4-carboxamido]succinate + ADP + phosphate + 2 H(+). Its pathway is purine metabolism; IMP biosynthesis via de novo pathway; 5-amino-1-(5-phospho-D-ribosyl)imidazole-4-carboxamide from 5-amino-1-(5-phospho-D-ribosyl)imidazole-4-carboxylate: step 1/2. In Shigella sonnei (strain Ss046), this protein is Phosphoribosylaminoimidazole-succinocarboxamide synthase.